An 858-amino-acid polypeptide reads, in one-letter code: Neurofilament medium polypeptide (858 aa).

Residue S2 is modified to N-acetylserine. Positions 2–99 (SYTMEPLGNP…KLSRSNEKEQ (98 aa)) are head. A disordered region spans residues 22–57 (ATYSRASASPSSGFRSQSWSRGSGSTVSSSYKRTNL). Low complexity predominate over residues 30–54 (SPSSGFRSQSWSRGSGSTVSSSYKR). A glycan (O-linked (GlcNAc) threonine) is linked at T47. The IF rod domain maps to 96–407 (EKEQLQGLND…KLLEGEETRF (312 aa)). Residues 100–131 (LQGLNDRFAGYIEKVHYLEQQNKEIEAELAAL) are coil 1A. Positions 132 to 144 (RQKHAGRAQLGDA) are linker 1. Residues 145-243 (YEQELRELRG…EEEVAELLAQ (99 aa)) form a coil 1B region. Residues 244 to 260 (LQASHATVERKDYLKTD) are linker 12. Residues 261–282 (LTTALKEIRAQLECQSDHNMHQ) are coil 2A. Residues 283-286 (AEEW) are linker 2. Residues 287 to 407 (FKCRYAKLTE…KLLEGEETRF (121 aa)) are coil 2B. Residues 408–858 (SAFSGSITGP…SHAVVKEIKE (451 aa)) are tail. Residue T427 is glycosylated (O-linked (GlcNAc) threonine). A disordered region spans residues 478 to 788 (AAKAQEEEQE…VVTNGLDVSP (311 aa)). 2 stretches are compositionally biased toward acidic residues: residues 484-500 (EEQE…EEEA) and 509-524 (AAEE…EEEE). Residues 525-541 (AAKSDAAEEGGSKKEEI) are compositionally biased toward basic and acidic residues. The span at 542-555 (EEKEEGEEAEEEEA) shows a compositional bias: acidic residues. Over residues 556–572 (EAKGKAEEAGAKVEKVK) the composition is skewed to basic and acidic residues. Residues 576–586 (AKSPPKSPPKS) show a composition bias toward pro residues. Residues 590–601 (EQAKAVQKAAAE) show a composition bias toward low complexity. Over residues 602–623 (VGKDQKAEKAAEKAAKEEKAAS) the composition is skewed to basic and acidic residues. Residues 624–637 (PEKPATPKVTSPEK) are compositionally biased toward low complexity. 2 stretches are compositionally biased toward basic and acidic residues: residues 651-664 (ITPE…KPTT) and 675-727 (ASPE…KAVV). Residues 728–743 (EESITVTKVTKVTAEV) show a composition bias toward low complexity. Basic and acidic residues predominate over residues 744 to 771 (EVSKEARKEDIAVNGEVEEKKDEAKEKE).

This sequence belongs to the intermediate filament family. There are a number of repeats of the tripeptide K-S-P, NFM is phosphorylated on a number of the serines in this motif. It is thought that phosphorylation of NFM results in the formation of interfilament cross bridges that are important in the maintenance of axonal caliber. Post-translationally, phosphorylation seems to play a major role in the functioning of the larger neurofilament polypeptides (NF-M and NF-H), the levels of phosphorylation being altered developmentally and coincident with a change in the neurofilament function.

The protein localises to the cytoplasm. The protein resides in the cytoskeleton. It is found in the cell projection. It localises to the axon. Neurofilaments usually contain three intermediate filament proteins: NEFL, NEFM, and NEFH which are involved in the maintenance of neuronal caliber. May additionally cooperate with other neuronal intermediate filament proteins to form neuronal filamentous networks. In Gallus gallus (Chicken), this protein is Neurofilament medium polypeptide (NEFM).